Reading from the N-terminus, the 274-residue chain is Exosome complex component Rrp42 (274 aa).

The protein belongs to the RNase PH family. Rrp42 subfamily. As to quaternary structure, component of the archaeal exosome complex. Forms a hexameric ring-like arrangement composed of 3 Rrp41-Rrp42 heterodimers. The hexameric ring associates with a trimer of Rrp4 and/or Csl4 subunits.

The protein resides in the cytoplasm. Its function is as follows. Non-catalytic component of the exosome, which is a complex involved in RNA degradation. Contributes to the structuring of the Rrp41 active site. This chain is Exosome complex component Rrp42, found in Pyrococcus horikoshii (strain ATCC 700860 / DSM 12428 / JCM 9974 / NBRC 100139 / OT-3).